A 212-amino-acid polypeptide reads, in one-letter code: Peptide methionine sulfoxide reductase MsrA (212 aa).

Cys52 is an active-site residue.

This sequence belongs to the MsrA Met sulfoxide reductase family.

It catalyses the reaction L-methionyl-[protein] + [thioredoxin]-disulfide + H2O = L-methionyl-(S)-S-oxide-[protein] + [thioredoxin]-dithiol. It carries out the reaction [thioredoxin]-disulfide + L-methionine + H2O = L-methionine (S)-S-oxide + [thioredoxin]-dithiol. Has an important function as a repair enzyme for proteins that have been inactivated by oxidation. Catalyzes the reversible oxidation-reduction of methionine sulfoxide in proteins to methionine. This is Peptide methionine sulfoxide reductase MsrA from Escherichia coli O6:K15:H31 (strain 536 / UPEC).